We begin with the raw amino-acid sequence, 327 residues long: MPGPTQTLSPNGENNNDIIQDNNGTIIPFRKHTVRGERSYSWGMAVNVYSTSITQETMSRHDIIAWVNDIVSLNYTKVEQLCSGAAYCQFMDMLFPGCISLKKVKFQAKLEHEYIHNFKLLQASFKRMNVDKVIPVEKLVKGRFQDNLDFIQWFKKFYDANYDGKEYDPVEARQGQDAIPPPDPGEQIFNLPKKSHHANSPTAGAAKSSPAAKPGSTPSRPSSAKRASSSGSASKSDKDLETQVIQLNEQVHSLKLALEGVEKERDFYFGKLREIELLCQEHGQENDDLVQRLMDILYASEEHEGHTEEPEAEEQAHEQQPPQQEEY.

Positions Met-1–Asp-21 are disordered. Pro-2 carries the post-translational modification N-acetylalanine. Ser-9 is subject to Phosphoserine. Residues Thr-57–Asp-159 form the Calponin-homology (CH) domain. At Tyr-167 the chain carries Phosphotyrosine. Disordered stretches follow at residues Glu-171 to Leu-240 and Ala-299 to Tyr-327. The interval Gln-187 to Tyr-327 is DCTN1-binding. Residues Ser-200–Ser-234 are compositionally biased toward low complexity. Phosphoserine is present on residues Ser-219 and Ser-236. The region spanning Ser-236–His-306 is the EB1 C-terminal domain. Residues Glu-259–Glu-302 form an APC-binding region. The span at Ser-300 to His-317 shows a compositional bias: basic and acidic residues. Residues Glu-318–Tyr-327 show a composition bias toward low complexity.

It belongs to the MAPRE family. Interacts with DCTN1. Interacts with APC (via C-terminal). Interacts with monomeric and polymerized tubulin. Interacts with SLAIN1. Interacts (via the N-terminal region) with BAG1. Interacts with ASB14. Interacts with HAX1; this interaction is essential for epidermal cell migration. Post-translationally, phosphorylated at Ser-236 by CK2 leading to enhanced cell adhesion. Phosphorylated by CDK1 and AURKB during mitosis reduces the binding affinity of MAPRE2 for microtubules. In terms of processing, ubiquitinated in an ASB14-dependent manner; leading to proteasomal degradation. As to expression, expressed in different tumor cell lines. Up-regulated in activated B- and T-lymphocytes.

The protein resides in the cytoplasm. It localises to the cytoskeleton. In terms of biological role, adapter protein that is involved in microtubule polymerization, and spindle function by stabilizing microtubules and anchoring them at centrosomes. Therefore, ensures mitotic progression and genome stability. Acts as a central regulator of microtubule reorganization in apico-basal epithelial differentiation. Plays a role during oocyte meiosis by regulating microtubule dynamics. Participates in neurite growth by interacting with plexin B3/PLXNB3 and microtubule reorganization during apico-basal epithelial differentiation. Also plays an essential role for cell migration and focal adhesion dynamics. Mechanistically, recruits HAX1 to microtubules in order to regulate focal adhesion dynamics. This chain is Microtubule-associated protein RP/EB family member 2 (MAPRE2), found in Homo sapiens (Human).